The chain runs to 142 residues: Hemoglobin subunit alpha (142 aa).

A Globin domain is found at 2–142 (VLSAADKSNV…VGTVLTSKYR (141 aa)). The residue at position 4 (S4) is a Phosphoserine. 2 positions are modified to N6-succinyllysine: K8 and K12. K17 bears the N6-acetyllysine; alternate mark. N6-succinyllysine; alternate is present on K17. Residue Y25 is modified to Phosphotyrosine. At S36 the chain carries Phosphoserine. At K41 the chain carries N6-succinyllysine. S50 is subject to Phosphoserine. O2 is bound at residue H59. H88 is a binding site for heme b. A Phosphoserine modification is found at S103. Residue T109 is modified to Phosphothreonine. Residues S125 and S132 each carry the phosphoserine modification. T135 and T138 each carry phosphothreonine. S139 carries the phosphoserine modification.

Belongs to the globin family. Heterotetramer of two alpha chains and two beta chains. Red blood cells.

Its function is as follows. Involved in oxygen transport from the lung to the various peripheral tissues. In terms of biological role, hemopressin acts as an antagonist peptide of the cannabinoid receptor CNR1. Hemopressin-binding efficiently blocks cannabinoid receptor CNR1 and subsequent signaling. The protein is Hemoglobin subunit alpha (HBA) of Pantholops hodgsonii (Chiru).